Consider the following 489-residue polypeptide: Membrane-bound acylglycerophosphatidylinositol O-acyltransferase frj (489 aa).

The next 3 helical transmembrane spans lie at 2–22 (SIDDVIYVICLLGCIGAGSYV), 40–60 (VLVVVIVSGLHSLHCFVSLAL), and 75–95 (LVTFAVMFGYLVFFRIFDFYF). Active-site residues include asparagine 331 and histidine 364. The next 2 helical transmembrane spans lie at 405 to 425 (VIFWIFKWFAFSYLGEAFLLS) and 433 to 453 (FYSSVYHIGYISWAAMTALGF).

Belongs to the membrane-bound acyltransferase family.

Its subcellular location is the membrane. The enzyme catalyses a 1-acyl-sn-glycero-3-phospho-(1D-myo-inositol) + (5Z,8Z,11Z,14Z)-eicosatetraenoyl-CoA = a 1-acyl-2-(5Z,8Z,11Z,14Z-eicosatetraenoyl)-sn-glycero-3-phospho-(1D-myo-inositol) + CoA. It catalyses the reaction a 1-acyl-sn-glycero-3-phosphocholine + an acyl-CoA = a 1,2-diacyl-sn-glycero-3-phosphocholine + CoA. It carries out the reaction (9Z)-hexadecenoyl-CoA + 1-hexadecanoyl-sn-glycero-3-phosphocholine = 1-hexadecanoyl-2-(9Z-hexadecenoyl)-sn-glycero-3-phosphocholine + CoA. The catalysed reaction is a 1-acyl-sn-glycero-3-phospho-L-serine + an acyl-CoA = a 1,2-diacyl-sn-glycero-3-phospho-L-serine + CoA. The enzyme catalyses 1-(9Z-octadecenoyl)-sn-glycero-3-phospho-L-serine + (9Z)-hexadecenoyl-CoA = 1-(9Z-octadecenoyl)-2-(9Z-hexadecenoyl)-sn-glycero-3-phospho-L-serine + CoA. It catalyses the reaction a 1-acyl-sn-glycero-3-phosphoethanolamine + an acyl-CoA = a 1,2-diacyl-sn-glycero-3-phosphoethanolamine + CoA. It carries out the reaction 1-hexadecanoyl-sn-glycero-3-phosphoethanolamine + (9Z)-hexadecenoyl-CoA = 1-hexadecanoyl-2-(9Z)-hexadecenoyl-sn-glycero-3-phosphoethanolamine + CoA. The protein operates within lipid metabolism; phospholipid metabolism. Acyltransferase that mediates the acylation of lysophospholipids to produce phospholipids (glycerophospholipids). Highest activity with lysophosphatidylinositol (1-acyl-sn-glycero-3-phospho-(1D-myo-inositol) or LPI) producing phosphatidylinositol (1,2-diacyl-sn-glycero-3-phospho-(1D-myo-inositol) or PI) (LPIAT activity), but also converts lysophosphatidylcholine (1-acyl-sn-glycero-3-phosphocholine or LPC) to phosphatidylcholine (1,2-diacyl-sn-glycero-3-phosphocholine or PC) (LPCAT activity), lysophosphatidylserine (1-acyl-2-hydroxy-sn-glycero-3-phospho-L-serine or LPS) to phosphatidylserine (1,2-diacyl-sn-glycero-3-phospho-L-serine or PS) (LPSAT activity), and lysophosphatidylethanolamine (1-acyl-sn-glycero-3-phosphoethanolamine or LPE) producing phosphatidylethanolamine (1,2-diacyl-sn-glycero-3-phosphoethanolamine or PE) (LPEAT activity). Has a preference for unsaturated fatty acid arachidonoyl-CoA ((5Z,8Z,11Z,14Z)-eicosatetraenoyl-CoA). Glycerophospholipids are important structural and functional components of cellular membrane, acyl-chain remodeling regulates the molecular species distribution of glycerophospholipids which can affect membrane fluidity and curvature. This Drosophila melanogaster (Fruit fly) protein is Membrane-bound acylglycerophosphatidylinositol O-acyltransferase frj.